The chain runs to 440 residues: Xylose isomerase (440 aa).

Active-site residues include H100 and D103. Positions 231, 267, 270, 295, 306, 308, and 338 each coordinate Mg(2+).

Belongs to the xylose isomerase family. Homotetramer. Mg(2+) is required as a cofactor.

It is found in the cytoplasm. The catalysed reaction is alpha-D-xylose = alpha-D-xylulofuranose. The chain is Xylose isomerase from Paraburkholderia xenovorans (strain LB400).